Consider the following 562-residue polypeptide: SLAIN motif-containing protein-like (562 aa).

Disordered stretches follow at residues 292-313 (QDYA…LHSL), 344-381 (HRYS…IQNH), and 409-562 (SLEA…DGCY). Low complexity-rich tracts occupy residues 295–311 (ASSS…ASLH) and 345–355 (RYSPSPLSSPR). 4 stretches are compositionally biased toward polar residues: residues 356 to 370 (CQSP…TTSR), 424 to 442 (QGPS…STPP), 465 to 531 (VSTS…STVP), and 539 to 553 (SRRS…STLG).

It belongs to the SLAIN motif-containing family.

The protein is SLAIN motif-containing protein-like of Xenopus laevis (African clawed frog).